The sequence spans 503 residues: Glycerol kinase (503 aa).

Residue threonine 12 coordinates ADP. The ATP site is built by threonine 12, threonine 13, and serine 14. Threonine 12 is a sn-glycerol 3-phosphate binding site. Arginine 16 lines the ADP pocket. Arginine 82, glutamate 83, tyrosine 134, and aspartate 243 together coordinate sn-glycerol 3-phosphate. Glycerol is bound by residues arginine 82, glutamate 83, tyrosine 134, aspartate 243, and glutamine 244. ADP contacts are provided by threonine 265 and glycine 308. Threonine 265, glycine 308, glutamine 312, and glycine 412 together coordinate ATP. Glycine 412 contributes to the ADP binding site.

Belongs to the FGGY kinase family.

It carries out the reaction glycerol + ATP = sn-glycerol 3-phosphate + ADP + H(+). It participates in polyol metabolism; glycerol degradation via glycerol kinase pathway; sn-glycerol 3-phosphate from glycerol: step 1/1. Inhibited by fructose 1,6-bisphosphate (FBP). In terms of biological role, key enzyme in the regulation of glycerol uptake and metabolism. Catalyzes the phosphorylation of glycerol to yield sn-glycerol 3-phosphate. The polypeptide is Glycerol kinase (Nitrobacter hamburgensis (strain DSM 10229 / NCIMB 13809 / X14)).